A 159-amino-acid polypeptide reads, in one-letter code: 6,7-dimethyl-8-ribityllumazine synthase (159 aa).

Residues phenylalanine 23, 58–60 (AYE), and 82–84 (TII) each bind 5-amino-6-(D-ribitylamino)uracil. Catalysis depends on histidine 90, which acts as the Proton donor. Leucine 115 provides a ligand contact to 5-amino-6-(D-ribitylamino)uracil. Residue arginine 129 coordinates (2S)-2-hydroxy-3-oxobutyl phosphate.

Belongs to the DMRL synthase family. In terms of assembly, forms an icosahedral capsid composed of 60 subunits, arranged as a dodecamer of pentamers.

It carries out the reaction (2S)-2-hydroxy-3-oxobutyl phosphate + 5-amino-6-(D-ribitylamino)uracil = 6,7-dimethyl-8-(1-D-ribityl)lumazine + phosphate + 2 H2O + H(+). Its pathway is cofactor biosynthesis; riboflavin biosynthesis; riboflavin from 2-hydroxy-3-oxobutyl phosphate and 5-amino-6-(D-ribitylamino)uracil: step 1/2. Its function is as follows. Catalyzes the formation of 6,7-dimethyl-8-ribityllumazine by condensation of 5-amino-6-(D-ribitylamino)uracil with 3,4-dihydroxy-2-butanone 4-phosphate. This is the penultimate step in the biosynthesis of riboflavin. The sequence is that of 6,7-dimethyl-8-ribityllumazine synthase from Blochmanniella floridana.